We begin with the raw amino-acid sequence, 258 residues long: Regulatory protein RecX (258 aa).

It belongs to the RecX family.

It is found in the cytoplasm. Its function is as follows. Modulates RecA activity. The protein is Regulatory protein RecX of Streptococcus uberis (strain ATCC BAA-854 / 0140J).